Consider the following 329-residue polypeptide: NADH-quinone oxidoreductase subunit H (329 aa).

9 helical membrane-spanning segments follow: residues 9–29 (LIKILILVAVFSALGGFATYI), 42–62 (GPCYVGPFGLLQVAADGIKLF), 75–95 (FIFTLAPIIAMVSAFVSMAPI), 117–137 (IGFLFFLAVGSAGIYAPILAG), 154–174 (IQLLSFEVVSTLTILAPLMVV), 188–208 (GGFLDWLVFKQPLAFVLFLIA), 238–258 (LKWGMFFLAEYAHLFAFSFVI), 269–291 (WGFIPGGIAILIKAGFFVFLSMW), and 309–329 (WKIMLPLALLNIVLTGIVILI).

This sequence belongs to the complex I subunit 1 family. In terms of assembly, NDH-1 is composed of 14 different subunits. Subunits NuoA, H, J, K, L, M, N constitute the membrane sector of the complex.

It localises to the cell inner membrane. It carries out the reaction a quinone + NADH + 5 H(+)(in) = a quinol + NAD(+) + 4 H(+)(out). Its function is as follows. NDH-1 shuttles electrons from NADH, via FMN and iron-sulfur (Fe-S) centers, to quinones in the respiratory chain. The immediate electron acceptor for the enzyme in this species is believed to be ubiquinone. Couples the redox reaction to proton translocation (for every two electrons transferred, four hydrogen ions are translocated across the cytoplasmic membrane), and thus conserves the redox energy in a proton gradient. This subunit may bind ubiquinone. In Helicobacter pylori (strain J99 / ATCC 700824) (Campylobacter pylori J99), this protein is NADH-quinone oxidoreductase subunit H.